Here is a 206-residue protein sequence, read N- to C-terminus: LexA repressor (206 aa).

The H-T-H motif DNA-binding region spans 28–48 (RAEIATRLGFKSANAAEEHLK). Residues serine 123 and lysine 160 each act as for autocatalytic cleavage activity in the active site.

It belongs to the peptidase S24 family. In terms of assembly, homodimer.

The catalysed reaction is Hydrolysis of Ala-|-Gly bond in repressor LexA.. Functionally, represses a number of genes involved in the response to DNA damage (SOS response), including recA and lexA. In the presence of single-stranded DNA, RecA interacts with LexA causing an autocatalytic cleavage which disrupts the DNA-binding part of LexA, leading to derepression of the SOS regulon and eventually DNA repair. In Shewanella oneidensis (strain ATCC 700550 / JCM 31522 / CIP 106686 / LMG 19005 / NCIMB 14063 / MR-1), this protein is LexA repressor.